Consider the following 258-residue polypeptide: (7aS)-7a-methyl-1,5-dioxo-2,3,5,6,7,7a-hexahydro-1H-indene-carboxyl-CoA hydrolase (258 aa).

Belongs to the enoyl-CoA hydratase/isomerase family.

It catalyses the reaction (7aS)-7a-methyl-1,5-dioxo-2,3,5,6,7,7a-hexahydro-1H-indene-carboxyl-CoA + H2O = (3E)-2-(2-carboxylatoethyl)-3-methyl-6-oxocyclohex-1-ene-1-carboxyl-CoA + H(+). The protein operates within steroid metabolism; cholesterol degradation. Functionally, involved in the final steps of cholesterol and steroid degradation. Catalyzes the hydrolytic ring D opening of (7aS)-7a-methyl-1,5-dioxo-2,3,5,6,7,7a-hexahydro-1H-indene-carboxyl-CoA (HIEC-CoA) to (3E)-2-(2-carboxylatoethyl)-3-methyl-6-oxocyclohex-1-ene-1-carboxyl-CoA (COCHEA-CoA). The sequence is that of (7aS)-7a-methyl-1,5-dioxo-2,3,5,6,7,7a-hexahydro-1H-indene-carboxyl-CoA hydrolase from Rhodococcus jostii (strain RHA1).